The primary structure comprises 484 residues: MGVPRTPSRTVLFERERTGLTYRVPSLLPVPPGPTLLAFVEQRLSPDDSHAHRLVLRRGTLAGGSVRWGALHVLGTAALAEHRSMNPCPVHDAGTGTVFLFFIAVLGHTPEAVQIATGRNAARLCCVASRDAGLSWGSARDLTEEAIGGAVQDWATFAVGPGHGVQLPSGRLLVPAYTYRVDRRECFGKICRTSPHSFAFYSDDHGRTWRCGGLVPNLRSGECQLAAVDGGQAGSFLYCNARSPLGSRVQALSTDEGTSFLPAERVASLPETAWGCQGSIVGFPAPAPNRPRDDSWSVGPGSPLQPPLLGPGVHEPPEEAAVDPRGGQVPGGPFSRLQPRGDGPRQPGPRPGVSGDVGSWTLALPMPFAAPPQSPTWLLYSHPVGRRARLHMGIRLSQSPLDPRSWTEPWVIYEGPSGYSDLASIGPAPEGGLVFACLYESGARTSYDEISFCTFSLREVLENVPASPKPPNLGDKPRGCCWPS.

Residues 22–25 (YRVP) carry the FRIP motif motif. Substrate-binding residues include arginine 23 and arginine 43. Active-site proton acceptor residues include aspartate 47 and aspartate 48. Residues 127-138 (VASRDAGLSWGS) form a BNR 1 repeat. Positions 177 and 179 each coordinate substrate. The stretch at 200-211 (FYSDDHGRTWRC) is one BNR 2 repeat. 2 residues coordinate substrate: glutamate 222 and arginine 242. One copy of the BNR 3 repeat lies at 251–262 (ALSTDEGTSFLP). Residues 284–357 (PAPAPNRPRD…GPRPGVSGDV (74 aa)) form a disordered region. A compositionally biased stretch (low complexity) spans 336–345 (RLQPRGDGPR). Arginine 389 serves as a coordination point for substrate. The active-site Nucleophile is the tyrosine 419. The active site involves glutamate 440.

The protein belongs to the glycosyl hydrolase 33 family. In terms of processing, N-glycosylated. In terms of tissue distribution, predominant form in liver. Also expressed in brain, kidney and colon. As to expression, highly expressed in brain and at lower levels in kidney and liver.

It localises to the cell membrane. The protein resides in the endoplasmic reticulum membrane. It is found in the microsome membrane. The protein localises to the mitochondrion membrane. Its subcellular location is the cell projection. It localises to the neuron projection. The protein resides in the mitochondrion inner membrane. It is found in the mitochondrion outer membrane. The protein localises to the lysosome lumen. The catalysed reaction is Hydrolysis of alpha-(2-&gt;3)-, alpha-(2-&gt;6)-, alpha-(2-&gt;8)- glycosidic linkages of terminal sialic acid residues in oligosaccharides, glycoproteins, glycolipids, colominic acid and synthetic substrates.. The enzyme catalyses a ganglioside GM3 + H2O = a beta-D-galactosyl-(1-&gt;4)-beta-D-glucosyl-(1&lt;-&gt;1)-ceramide + N-acetylneuraminate. It catalyses the reaction a ganglioside GM3 (d18:1(4E)) + H2O = a beta-D-Gal-(1-&gt;4)-beta-D-Glc-(1&lt;-&gt;1)-Cer(d18:1(4E)) + N-acetylneuraminate. It carries out the reaction a ganglioside GM2 + H2O = a ganglioside GA2 + N-acetylneuraminate. The catalysed reaction is a ganglioside GM2 (d18:1(4E)) + H2O = a ganglioside GA2 (d18:1(4E)) + N-acetylneuraminate. The enzyme catalyses a ganglioside GD1a + H2O = a ganglioside GM1 + N-acetylneuraminate. It catalyses the reaction a ganglioside GD1a (d18:1(4E)) + H2O = a ganglioside GM1 (d18:1(4E)) + N-acetylneuraminate. It carries out the reaction a ganglioside GD3 + H2O = a ganglioside GM3 + N-acetylneuraminate. The catalysed reaction is a ganglioside GD3 (d18:1(4E)) + H2O = a ganglioside GM3 (d18:1(4E)) + N-acetylneuraminate. Its function is as follows. Exo-alpha-sialidase that catalyzes the hydrolytic cleavage of the terminal sialic acid (N-acetylneuraminic acid, Neu5Ac) of a glycan moiety in the catabolism of glycolipids, glycoproteins and oligosacharides. Efficiently hydrolyzes gangliosides including alpha-(2-&gt;3)-sialylated GD1a and GM3 and alpha-(2-&gt;8)-sialylated GD3. Hydrolyzes poly-alpha-(2-&gt;8)-sialylated neural cell adhesion molecule NCAM1 likely at growth cones, suppressing neurite outgrowth in hippocampal neurons. May desialylate sialyl Lewis A and X antigens at the cell surface, down-regulating these glycan epitopes recognized by SELE/E selectin in the initiation of cell adhesion and extravasation. Has sialidase activity toward mucin, fetuin and sialyllactose. This is Sialidase-4 (NEU4) from Homo sapiens (Human).